The following is a 121-amino-acid chain: Fluoride-specific ion channel FluC 1 (121 aa).

A run of 4 helical transmembrane segments spans residues 3 to 23 (YVYI…ISFL), 35 to 55 (VANL…IAFF), 64 to 84 (AITT…LELI), and 92 to 112 (FITL…LCYV). 2 residues coordinate Na(+): Gly-71 and Thr-74.

It belongs to the fluoride channel Fluc/FEX (TC 1.A.43) family.

The protein localises to the cell membrane. The enzyme catalyses fluoride(in) = fluoride(out). With respect to regulation, na(+) is not transported, but it plays an essential structural role and its presence is essential for fluoride channel function. Functionally, fluoride-specific ion channel. Important for reducing fluoride concentration in the cell, thus reducing its toxicity. The sequence is that of Fluoride-specific ion channel FluC 1 from Staphylococcus aureus (strain bovine RF122 / ET3-1).